We begin with the raw amino-acid sequence, 504 residues long: Maturase K (504 aa).

This sequence belongs to the intron maturase 2 family. MatK subfamily.

Its subcellular location is the plastid. The protein localises to the chloroplast. In terms of biological role, usually encoded in the trnK tRNA gene intron. Probably assists in splicing its own and other chloroplast group II introns. This chain is Maturase K, found in Pachira aquatica (Guiana chestnut).